We begin with the raw amino-acid sequence, 1235 residues long: ATP-dependent helicase/nuclease subunit A (1235 aa).

In terms of domain architecture, UvrD-like helicase ATP-binding spans 12 to 482; it reads TLWTDDQWKA…IDLSQNFRSR (471 aa). An ATP-binding site is contributed by 33 to 40; the sequence is AAAGSGKT. The region spanning 509–800 is the UvrD-like helicase C-terminal domain; the sequence is AAELTLGANF…RMMTIHASKG (292 aa).

Belongs to the helicase family. AddA subfamily. In terms of assembly, heterodimer of AddA and AddB/RexB. Mg(2+) serves as cofactor.

The catalysed reaction is Couples ATP hydrolysis with the unwinding of duplex DNA by translocating in the 3'-5' direction.. The enzyme catalyses ATP + H2O = ADP + phosphate + H(+). In terms of biological role, the heterodimer acts as both an ATP-dependent DNA helicase and an ATP-dependent, dual-direction single-stranded exonuclease. Recognizes the chi site generating a DNA molecule suitable for the initiation of homologous recombination. The AddA nuclease domain is required for chi fragment generation; this subunit has the helicase and 3' -&gt; 5' nuclease activities. The sequence is that of ATP-dependent helicase/nuclease subunit A from Listeria welshimeri serovar 6b (strain ATCC 35897 / DSM 20650 / CCUG 15529 / CIP 8149 / NCTC 11857 / SLCC 5334 / V8).